Here is a 59-residue protein sequence, read N- to C-terminus: Insulin (59 aa).

Intrachain disulfides connect Cys7-Cys45, Cys19-Cys58, and Cys44-Cys49.

Belongs to the insulin family. Heterodimer of a B chain and an A chain linked by two disulfide bonds.

The protein resides in the secreted. Functionally, insulin decreases blood glucose concentration. It increases cell permeability to monosaccharides, amino acids and fatty acids. It accelerates glycolysis, the pentose phosphate cycle, and glycogen synthesis in liver. The sequence is that of Insulin (ins) from Chimaera monstrosa (Rabbit fish).